The sequence spans 1137 residues: UDP-N-acetylglucosamine transferase subunit ALG13 (1137 aa).

Positions 1–125 are glycosyltransferase activity; sequence MKCVFVTVGT…LHKEGHLFYC (125 aa). Residues 126-400 are deubiquitinase activity; that stretch reads TCRVLTCPGQ…GSKKNRNNAV (275 aa). The OTU domain occupies 231-352; it reads LFRKLTAKDA…SGHYDSVYSK (122 aa). Catalysis depends on aspartate 239, which acts as the For deubiquitinase activity. Cysteine 242 functions as the Nucleophile; for deubiquitinase activity in the catalytic mechanism. Histidine 345 functions as the For deubiquitinase activity in the catalytic mechanism. The Tudor domain occupies 492-552; the sequence is QYYLGDKCQV…KPVTQVMSVP (61 aa). 2 disordered regions span residues 641–660 and 911–974; these read HFHP…MPRN and IPHA…SGSD. Composition is skewed to pro residues over residues 918 to 946 and 956 to 967; these read LPPP…PPPA and QPPPPLPPPPYS.

The protein belongs to the glycosyltransferase 28 family. Forms with ALG14 the active heterodimeric UDP-N-acetylglucosamine transferase complex. As to quaternary structure, not able to interact with ALG14 to form an active UDP-N-acetylglucosamine transferase complex.

The protein resides in the endoplasmic reticulum membrane. It carries out the reaction an N-acetyl-alpha-D-glucosaminyl-diphospho-di-trans,poly-cis-dolichol + UDP-N-acetyl-alpha-D-glucosamine = an N,N'-diacetylchitobiosyl-diphospho-di-trans,poly-cis-dolichol + UDP + H(+). It participates in protein modification; protein glycosylation. Functionally, catalytic subunit of the UDP-N-acetylglucosamine transferase complex that operates in the biosynthetic pathway of dolichol-linked oligosaccharides, the glycan precursors employed in protein asparagine (N)-glycosylation. The assembly of dolichol-linked oligosaccharides begins on the cytosolic side of the endoplasmic reticulum membrane and finishes in its lumen. The sequential addition of sugars to dolichol pyrophosphate produces dolichol-linked oligosaccharides containing fourteen sugars, including two GlcNAcs, nine mannoses and three glucoses. Once assembled, the oligosaccharide is transferred from the lipid to nascent proteins by oligosaccharyltransferases. On the cytoplasmic face of the endoplasmic reticulum, the dimeric ALG13/ALG14 complex catalyzes the second step of dolichol pyrophosphate biosynthesis, transferring a beta1,4-linked N-acetylglucosamine (GlcNAc) from UDP-GlcNAc to GlcNAc-pyrophosphatedolichol (Gn-PDol) to produce N,N'-diacetylchitobiosyl diphosphodolichol. N,N'-diacetylchitobiosyl diphosphodolichol is a substrate for ALG1, the following enzyme in the biosynthetic pathway. In terms of biological role, no glycosyltransferase or deubiquitinase activity is detected for this potential multifunctional enzyme. The polypeptide is UDP-N-acetylglucosamine transferase subunit ALG13 (Homo sapiens (Human)).